The sequence spans 533 residues: Putative amidase C550.07 (533 aa).

Residues K132 and S207 each act as charge relay system in the active site. S231 functions as the Acyl-ester intermediate in the catalytic mechanism.

It belongs to the amidase family.

The protein resides in the cytoplasm. It is found in the nucleus. It catalyses the reaction a monocarboxylic acid amide + H2O = a monocarboxylate + NH4(+). This Schizosaccharomyces pombe (strain 972 / ATCC 24843) (Fission yeast) protein is Putative amidase C550.07.